We begin with the raw amino-acid sequence, 3391 residues long: Genome polyprotein (3391 aa).

The interaction with host EXOC1 stretch occupies residues 1–15 (MNDQRKKAKNTPFNM). The Cytoplasmic segment spans residues 1 to 101 (MNDQRKKAKN…LNILNRRRRS (101 aa)). The segment at 37–72 (MLQGRGPLKLYMALVAFLRFLTIPPTAGILKRWGTI) is hydrophobic; homodimerization of capsid protein C. Residues 101-114 (SAGMIIMLIPTVMA) constitute a propeptide, ER anchor for the capsid protein C, removed in mature form by serine protease NS3. The helical transmembrane segment at 102 to 119 (AGMIIMLIPTVMAFHLTT) threads the bilayer. The Extracellular segment spans residues 120–242 (RNGEPHMIVS…HVQRIETWIL (123 aa)). The N-linked (GlcNAc...) asparagine; by host glycan is linked to N183. A helical membrane pass occupies residues 243–260 (RHPGFTMMAAILAYTIGT). A topological domain (cytoplasmic) is located at residue T261. A helical membrane pass occupies residues 262–280 (HFQRALIFILLTAVTPSMT). Residues 281-725 (MRCIGMSNRD…LHQVFGAIYG (445 aa)) are Extracellular-facing. Disulfide bonds link C283/C310, C340/C401, C354/C385, and C372/C396. N-linked (GlcNAc...) asparagine; by host glycosylation is present at N347. The fusion peptide stretch occupies residues 378–391 (DRGWGNGCGLFGKG). N-linked (GlcNAc...) asparagine; by host glycosylation is present at N433. Intrachain disulfides connect C465–C565 and C582–C613. A helical membrane pass occupies residues 726–746 (AAFSGVSWTMKILIGVIITWI). The Cytoplasmic segment spans residues 747 to 752 (GMNSRS). The helical transmembrane segment at 753 to 773 (TSLSVTLVLVGIVTLYLGVMV) threads the bilayer. Over 774-1195 (QADSGCVVSW…MVGATMTDDI (422 aa)) the chain is Extracellular. 6 cysteine pairs are disulfide-bonded: C779–C790, C830–C918, C954–C998, C1055–C1104, C1066–C1088, and C1087–C1091. Residues N905 and N982 are each glycosylated (N-linked (GlcNAc...) asparagine; by host). N1134 and N1174 each carry an N-linked (GlcNAc...) asparagine; by host glycan. Residues 1196–1220 (GMGVTYLALLAAFKVRPTFAAGLLL) traverse the membrane as a helical segment. Residues 1221-1226 (RKLTSK) lie on the Cytoplasmic side of the membrane. A helical membrane pass occupies residues 1227 to 1245 (ALMMTTIGIVLSSQSTTPE). Residues 1246-1269 (TILELTDALALGMMVLKMVRNMEK) lie on the Lumenal side of the membrane. A helical membrane pass occupies residues 1270-1290 (YQLAVTIMAILCVPNAVILQN). Residue A1291 is a topological domain, cytoplasmic. The helical transmembrane segment at 1292-1310 (WKVSCTILAVVSVSPLFLT) threads the bilayer. At 1311–1317 (SSQQKTD) the chain is on the lumenal side. Residues 1318–1338 (WIPLALTIKGLNPTAIFLTTL) form a helical membrane-spanning segment. Over 1339-1346 (SRTSKKRS) the chain is Cytoplasmic. Residues 1347–1367 (WPLNEAIMAVGMVSILASSLL) traverse the membrane as a helical segment. Over 1368–1370 (KND) the chain is Lumenal. A helical transmembrane segment spans residues 1371–1391 (IPMTGPLVAGGPLTVCYVLTG). Residues 1392 to 1447 (RSADLELERAADVKWEDQAEISGSSPILSITISEDGSMSIKNEEEEQTLTILIRTG) lie on the Cytoplasmic side of the membrane. The interval 1398–1437 (LERAADVKWEDQAEISGSSPILSITISEDGSMSIKNEEEE) is interacts with and activates NS3 protease. The segment at residues 1448 to 1468 (LLVISGLFPVSIPITAAAWYL) is an intramembrane region (helical). The Cytoplasmic portion of the chain corresponds to 1469–2147 (WEVKKQRAGV…LSELPETLET (679 aa)). A Peptidase S7 domain is found at 1476-1653 (AGVLWDVPSP…EKSIEDNPEI (178 aa)). Active-site charge relay system; for serine protease NS3 activity residues include H1526, D1550, and S1610. In terms of domain architecture, Helicase ATP-binding spans 1655–1811 (DDIFRKRRLT…QSNAPIIDEE (157 aa)). Residues 1659–1662 (RKRR) are important for RNA-binding. Position 1668–1675 (1668–1675 (LHPGAGKT)) interacts with ATP. The DEAH box signature appears at 1759-1762 (DEAH). In terms of domain architecture, Helicase C-terminal spans 1821-1988 (SGHEWVTDFK…IIPSMFEPER (168 aa)). At K1863 the chain carries N6-acetyllysine; by host. Residues 2148 to 2168 (LLLLTLLATVTGGILLFLMSG) form a helical membrane-spanning segment. Over 2169-2170 (RG) the chain is Lumenal. The helical intramembrane region spans 2171–2191 (IGKMTLGMCCIITASILLWYA). Q2192 is a topological domain (lumenal). The chain crosses the membrane as a helical span at residues 2193–2213 (IQPHWIAASIILEFFLIVLLI). The Cytoplasmic segment spans residues 2214–2228 (PEPEKQRTPQDNQLT). The helical transmembrane segment at 2229–2249 (YVVIAILTVVAATMANEMGFL) threads the bilayer. Topologically, residues 2250–2274 (EKTKKDLGLGSIATQQPESNILDID) are lumenal. The helical intramembrane region spans 2275–2295 (LRPASAWTLYAVATTFVTPML). At 2296-2316 (RHSIENSSVNVSLTAIANQAT) the chain is on the lumenal side. N-linked (GlcNAc...) asparagine; by host glycosylation is found at N2301 and N2305. The segment at residues 2317 to 2337 (VLMGLGKGWPLSKMDIGVPLL) is an intramembrane region (helical). Topologically, residues 2338–2347 (AIGCYSQVNP) are lumenal. The chain crosses the membrane as a helical span at residues 2348 to 2368 (TTLTAALFLLVAHYAIIGPAL). Residues 2369-2413 (QAKASREAQKRAAAGIMKNPTVDGITVIDLDPIPYDPKFEKQLGQ) lie on the Cytoplasmic side of the membrane. Residues 2414–2434 (VMLLVLCVTQVLMMRTTWALC) traverse the membrane as a helical segment. Residues 2435-2459 (EVLTLATGPISTLWEGNPGRFWNTT) lie on the Lumenal side of the membrane. A glycan (N-linked (GlcNAc...) asparagine; by host) is linked at N2457. The helical transmembrane segment at 2460 to 2480 (IAVSMANIFRGSYLAGAGLLF) threads the bilayer. The Cytoplasmic segment spans residues 2481–3391 (SIMKNTTNAR…REEEEAGVLW (911 aa)). Positions 2493 to 2755 (TGNIGETLGE…DVDLGSGTRN (263 aa)) constitute an mRNA cap 0-1 NS5-type MT domain. S2547 contacts S-adenosyl-L-methionine. Position 2547 is a phosphoserine (S2547). K2552 serves as the catalytic For 2'-O-MTase activity. Positions 2568–2571 (VVDL) match the SUMO-interacting motif motif. The S-adenosyl-L-methionine site is built by G2577, W2578, T2595, K2596, D2622, and V2623. D2637 (for 2'-O-MTase activity) is an active-site residue. Residue I2638 participates in S-adenosyl-L-methionine binding. Active-site for 2'-O-MTase activity residues include K2672 and E2708. Y2710 is an S-adenosyl-L-methionine binding site. Residues E2929, H2933, C2938, and C2941 each contribute to the Zn(2+) site. One can recognise a RdRp catalytic domain in the interval 3020–3169 (AMYADDTAGW…PLDDRLPSAL (150 aa)). Zn(2+) is bound by residues H3203, C3219, and C3338.

This sequence in the N-terminal section; belongs to the class I-like SAM-binding methyltransferase superfamily. mRNA cap 0-1 NS5-type methyltransferase family. As to quaternary structure, homodimer. Interacts (via N-terminus) with host EXOC1 (via C-terminus); this interaction results in EXOC1 degradation through the proteasome degradation pathway. Forms heterodimers with envelope protein E in the endoplasmic reticulum and Golgi. In terms of assembly, homodimer; in the endoplasmic reticulum and Golgi. Interacts with protein prM. Interacts with non-structural protein 1. As to quaternary structure, homodimer; Homohexamer when secreted. Interacts with envelope protein E. Interacts with host PRKAA1. Interacts (via N-terminus) with serine protease NS3. In terms of assembly, forms a heterodimer with serine protease NS3. May form homooligomers. As to quaternary structure, forms a heterodimer with NS2B. Interacts with NS4B. Interacts with unphosphorylated RNA-directed RNA polymerase NS5; this interaction stimulates RNA-directed RNA polymerase NS5 guanylyltransferase activity. Interacts with host SHFL. Interacts with host MAVS; this interaction inhibits the synthesis of IFN-beta. Interacts with host SHFL. Interacts with host AUP1; the interaction occurs in the presence of Dengue virus NS4B and induces lipophagy which facilitates production of virus progeny particles. May interact with host SRPRA and SEC61G. In terms of assembly, interacts with serine protease NS3. As to quaternary structure, homodimer. Interacts with host STAT2; this interaction inhibits the phosphorylation of the latter, and, when all viral proteins are present (polyprotein), targets STAT2 for degradation. Interacts with serine protease NS3. Interacts with host PAF1 complex; the interaction may prevent the recruitment of the PAF1 complex to interferon-responsive genes, and thus reduces the immune response. Specific enzymatic cleavages in vivo yield mature proteins. Cleavages in the lumen of endoplasmic reticulum are performed by host signal peptidase, whereas cleavages in the cytoplasmic side are performed by serine protease NS3. Signal cleavage at the 2K-4B site requires a prior NS3 protease-mediated cleavage at the 4A-2K site. Post-translationally, cleaved in post-Golgi vesicles by a host furin, releasing the mature small envelope protein M, and peptide pr. This cleavage is incomplete as up to 30% of viral particles still carry uncleaved prM. In terms of processing, N-glycosylated. N-glycosylated. The excreted form is glycosylated and this is required for efficient secretion of the protein from infected cells. Post-translationally, acetylated by host KAT5. Acetylation modulates NS3 RNA-binding and unwinding activities and plays an important positive role for viral replication. In terms of processing, sumoylation of RNA-directed RNA polymerase NS5 increases NS5 protein stability allowing proper viral RNA replication. Phosphorylated on serines residues. This phosphorylation may trigger NS5 nuclear localization.

The protein localises to the virion. It localises to the host nucleus. It is found in the host cytoplasm. The protein resides in the host perinuclear region. Its subcellular location is the secreted. The protein localises to the virion membrane. It localises to the host endoplasmic reticulum membrane. It is found in the host mitochondrion. It carries out the reaction Selective hydrolysis of -Xaa-Xaa-|-Yaa- bonds in which each of the Xaa can be either Arg or Lys and Yaa can be either Ser or Ala.. The catalysed reaction is RNA(n) + a ribonucleoside 5'-triphosphate = RNA(n+1) + diphosphate. It catalyses the reaction a ribonucleoside 5'-triphosphate + H2O = a ribonucleoside 5'-diphosphate + phosphate + H(+). The enzyme catalyses ATP + H2O = ADP + phosphate + H(+). It carries out the reaction a 5'-end (5'-triphosphoguanosine)-ribonucleoside in mRNA + S-adenosyl-L-methionine = a 5'-end (N(7)-methyl 5'-triphosphoguanosine)-ribonucleoside in mRNA + S-adenosyl-L-homocysteine. The catalysed reaction is a 5'-end (N(7)-methyl 5'-triphosphoguanosine)-ribonucleoside in mRNA + S-adenosyl-L-methionine = a 5'-end (N(7)-methyl 5'-triphosphoguanosine)-(2'-O-methyl-ribonucleoside) in mRNA + S-adenosyl-L-homocysteine + H(+). Its function is as follows. Plays a role in virus budding by binding to the cell membrane and gathering the viral RNA into a nucleocapsid that forms the core of a mature virus particle. During virus entry, may induce genome penetration into the host cytoplasm after hemifusion induced by the surface proteins. Can migrate to the cell nucleus where it modulates host functions. Overcomes the anti-viral effects of host EXOC1 by sequestering and degrading the latter through the proteasome degradation pathway. In terms of biological role, inhibits RNA silencing by interfering with host Dicer. Functionally, prevents premature fusion activity of envelope proteins in trans-Golgi by binding to envelope protein E at pH6.0. After virion release in extracellular space, gets dissociated from E dimers. Acts as a chaperone for envelope protein E during intracellular virion assembly by masking and inactivating envelope protein E fusion peptide. prM is the only viral peptide matured by host furin in the trans-Golgi network probably to avoid catastrophic activation of the viral fusion activity in acidic Golgi compartment prior to virion release. prM-E cleavage is inefficient, and many virions are only partially matured. These uncleaved prM would play a role in immune evasion. Its function is as follows. May play a role in virus budding. Exerts cytotoxic effects by activating a mitochondrial apoptotic pathway through M ectodomain. May display a viroporin activity. In terms of biological role, binds to host cell surface receptor and mediates fusion between viral and cellular membranes. Envelope protein is synthesized in the endoplasmic reticulum in the form of heterodimer with protein prM. They play a role in virion budding in the ER, and the newly formed immature particle is covered with 60 spikes composed of heterodimer between precursor prM and envelope protein E. The virion is transported to the Golgi apparatus where the low pH causes dissociation of PrM-E heterodimers and formation of E homodimers. prM-E cleavage is inefficient, and many virions are only partially matured. These uncleaved prM would play a role in immune evasion. Functionally, involved in immune evasion, pathogenesis and viral replication. Once cleaved off the polyprotein, is targeted to three destinations: the viral replication cycle, the plasma membrane and the extracellular compartment. Essential for viral replication. Required for formation of the replication complex and recruitment of other non-structural proteins to the ER-derived membrane structures. Excreted as a hexameric lipoparticle that plays a role against host immune response. Antagonizing the complement function. Binds to the host macrophages and dendritic cells. Inhibits signal transduction originating from Toll-like receptor 3 (TLR3). Involved in immune evasion, pathogenesis and viral replication. Once cleaved off the polyprotein, is targeted to three destinations: the viral replication cycle, the plasma membrane and the extracellular compartment. Essential for viral replication. Required for formation of the replication complex and recruitment of other non-structural proteins to the ER-derived membrane structures. Excreted as a hexameric lipoparticle that plays a role against host immune response. Antagonizing the complement function. Binds to the host macrophages and dendritic cells. Inhibits signal transduction originating from Toll-like receptor 3 (TLR3). Mediates complement activation, which may contribute to the pathogenesis of the vascular leakage that occurs in severe dengue disease. Activates autophagy through the AMPK/ERK/mTOR signaling pathway. Mechanistically, acts as the assembly platform for STK11-AMPK interactions and promotes STK11-AMPK interactions. In turn, promotes phosphorylation of the AMPK kinase structural domain and activates AMPK, thereby positively regulating the AMPK/ERK/mTOR signaling pathway and inducing autophagy. Its function is as follows. Component of the viral RNA replication complex that functions in virion assembly and antagonizes the host immune response. In terms of biological role, required cofactor for the serine protease function of NS3. May have membrane-destabilizing activity and form viroporins. Functionally, displays three enzymatic activities: serine protease, NTPase and RNA helicase. NS3 serine protease, in association with NS2B, performs its autocleavage and cleaves the polyprotein at dibasic sites in the cytoplasm: C-prM, NS2A-NS2B, NS2B-NS3, NS3-NS4A, NS4A-2K and NS4B-NS5. NS3 RNA helicase binds RNA and unwinds dsRNA in the 3' to 5' direction. Regulates the ATPase activity of the NS3 helicase activity. NS4A allows NS3 helicase to conserve energy during unwinding. Plays a role in the inhibition of the host innate immune response. Interacts with host MAVS and thereby prevents the interaction between RIGI and MAVS. In turn, IFN-beta production is impaired. Interacts with host AUP1 which mediates induction of lipophagy in host cells and facilitates production of virus progeny particles. Its function is as follows. Functions as a signal peptide for NS4B and is required for the interferon antagonism activity of the latter. In terms of biological role, induces the formation of ER-derived membrane vesicles where the viral replication takes place. Inhibits interferon (IFN)-induced host STAT1 phosphorylation and nuclear translocation, thereby preventing the establishment of cellular antiviral state by blocking the IFN-alpha/beta pathway. Functionally, replicates the viral (+) and (-) RNA genome, and performs the capping of genomes in the cytoplasm. NS5 methylates viral RNA cap at guanine N-7 and ribose 2'-O positions. Besides its role in RNA genome replication, also prevents the establishment of cellular antiviral state by blocking the interferon-alpha/beta (IFN-alpha/beta) signaling pathway. Inhibits host TYK2 and STAT2 phosphorylation, thereby preventing activation of JAK-STAT signaling pathway. May reduce immune responses by preventing the recruitment of the host PAF1 complex to interferon-responsive genes. The protein is Genome polyprotein of Aedes aegypti (Yellowfever mosquito).